The chain runs to 557 residues: Formate--tetrahydrofolate ligase 1 (557 aa).

Residue 66–73 coordinates ATP; that stretch reads TPAGEGKT.

This sequence belongs to the formate--tetrahydrofolate ligase family.

It catalyses the reaction (6S)-5,6,7,8-tetrahydrofolate + formate + ATP = (6R)-10-formyltetrahydrofolate + ADP + phosphate. Its pathway is one-carbon metabolism; tetrahydrofolate interconversion. In Streptococcus sanguinis (strain SK36), this protein is Formate--tetrahydrofolate ligase 1.